The sequence spans 183 residues: ATP-dependent protease subunit HslV (183 aa).

Threonine 2 is an active-site residue. Na(+) contacts are provided by glycine 157, cysteine 160, and threonine 163.

The protein belongs to the peptidase T1B family. HslV subfamily. A double ring-shaped homohexamer of HslV is capped on each side by a ring-shaped HslU homohexamer. The assembly of the HslU/HslV complex is dependent on binding of ATP.

The protein resides in the cytoplasm. It carries out the reaction ATP-dependent cleavage of peptide bonds with broad specificity.. Allosterically activated by HslU binding. Its function is as follows. Protease subunit of a proteasome-like degradation complex believed to be a general protein degrading machinery. This is ATP-dependent protease subunit HslV from Vibrio campbellii (strain ATCC BAA-1116).